A 411-amino-acid chain; its full sequence is Nuclear receptor subfamily 2 group F member 1-A (411 aa).

The segment at 1-68 (MAMVVSVWRD…AGDKGSQNSG (68 aa)) is disordered. A compositionally biased stretch (low complexity) spans 24 to 46 (NPAAQPAREQQQAASAAPHTPQT). A DNA-binding region (nuclear receptor) is located at residues 73 to 148 (HIECVVCGDK…VGMRREAVQR (76 aa)). 2 NR C4-type zinc fingers span residues 76 to 96 (CVVC…CEGC) and 112 to 136 (CRAN…LKKC). One can recognise an NR LBD domain in the interval 174-400 (YLSGYISLLL…TLIRDMLLSG (227 aa)).

It belongs to the nuclear hormone receptor family. NR2 subfamily. In terms of tissue distribution, first expressed in 11-12 hour embryos. In the rostral brain of 13 hour embryos, expressed within the anterior half of the midbrain and the posterior part of the diencephalon. In the presumptive hindbrain, expressed in a segment-like stripe in the anterior region, resembling the presumptive rhombomere units of the hindbrain. Also detected in the intermediate mesoderm, posterior to the first somite. As somitogenesis proceeds, expression extends posteriorly and flanks the 10 most anterior somites. Expression changes extensively both in level and expansion of domains between 13 and 20 hours. In the rostral brain, expression extends to include a major part of the diencephalon and a caudal portion of the telencephalon. Within the hindbrain, strongly expressed in the two most anterior rhombomeres, and a lower but uniform expression is seen to extend throughout rhombomere 7. In 28 hour embryos, higher and more uniform expression is seen in both rostral and hindbrain areas. Also expressed in the retina of the eye.

Its subcellular location is the nucleus. Functionally, putative transcription factor that is required in photoreceptor cells precursors during eye development. This Danio rerio (Zebrafish) protein is Nuclear receptor subfamily 2 group F member 1-A (nr2f1a).